The primary structure comprises 106 residues: Putative double-stranded DNA mimic protein PM0536 (106 aa).

This sequence belongs to the putative dsDNA mimic protein family.

Its function is as follows. May act as a double-stranded DNA (dsDNA) mimic. Probably regulates the activity of a dsDNA-binding protein. In Pasteurella multocida (strain Pm70), this protein is Putative double-stranded DNA mimic protein PM0536.